A 281-amino-acid polypeptide reads, in one-letter code: Nuclear transcription factor Y subunit nfya-2 (281 aa).

Disordered stretches follow at residues 1–27 (MNPRGNPSKMPTQIVLNRRPAAPARPQ) and 163–261 (REMR…VQEE). The short motif at 150 to 173 (MVNPRQYKRIIKRREMRQKMEDSG) is the Subunit association domain (SAD) element. Positions 166 to 188 (RQKMEDSGRLPLERQKYMHESRR) are enriched in basic and acidic residues. The segment at residues 180 to 204 (QKYMHESRRQHALKRRRTGGRFDAN) is a DNA-binding region (NFYA/HAP2-type). Basic residues predominate over residues 189–198 (QHALKRRRTG). Residues 204 to 220 (NAEAAAASSEPSISSAA) show a composition bias toward low complexity.

This sequence belongs to the NFYA/HAP2 subunit family. As to quaternary structure, forms a heterotrimeric transcription factor complex (nfya-2-NF-Y complex) composed of nfya-2, nfyb-1 and nfyc-1. Interacts with the nfyb-1 and nfyc-1 dimer; the interaction is required for subsequent binding to the 5'-CCAAT-3' box motif in DNA. Does not interact with either nfyb-1 or nfyc-1 in their monomeric form. As to expression, highly expressed in certain parts of the gonads. Expressed in the spermatheca, intestine and in some neurons in the head. Not expressed in the intestine, the hypodermis, body wall muscle surrounding the pseudocoelomic space, secretory cells in the pharyngeal terminal bulb wall, in the small ganglia surrounding the pharynx and in the neurons running anteriorly to the sensory organs in the head.

It is found in the nucleus. Component of the sequence-specific heterotrimeric transcription factor (nfya-2-NF-Y) which specifically recognizes a 5'-CCAAT-3' box motif found in the promoters of its target genes to regulate their expression and control cellular identity in particular tissue types. In association with the components in the nfya-2-NF-Y complex, may repress the expression of the T-box transcription factor tbx-2 throughout larval development, which most likely restricts its expression to certain tissues. This chain is Nuclear transcription factor Y subunit nfya-2, found in Caenorhabditis elegans.